The following is a 406-amino-acid chain: Succinylornithine transaminase (406 aa).

Position 252 is an N6-(pyridoxal phosphate)lysine (Lys252).

The protein belongs to the class-III pyridoxal-phosphate-dependent aminotransferase family. AstC subfamily. Pyridoxal 5'-phosphate is required as a cofactor.

The catalysed reaction is N(2)-succinyl-L-ornithine + 2-oxoglutarate = N-succinyl-L-glutamate 5-semialdehyde + L-glutamate. It participates in amino-acid degradation; L-arginine degradation via AST pathway; L-glutamate and succinate from L-arginine: step 3/5. Functionally, catalyzes the transamination of N(2)-succinylornithine and alpha-ketoglutarate into N(2)-succinylglutamate semialdehyde and glutamate. Can also act as an acetylornithine aminotransferase. This is Succinylornithine transaminase from Escherichia coli O45:K1 (strain S88 / ExPEC).